Reading from the N-terminus, the 63-residue chain is Conotoxin TxMRCL-D012 (63 aa).

The signal sequence occupies residues 1–19; the sequence is MRCLPVFVILLLLIASTPS. Positions 20–47 are excised as a propeptide; sequence DTVPLKTKDDMPQASFHGNARRTLQMLS. The residue at position 50 (Q50) is a Pyrrolidone carboxylic acid.

This sequence belongs to the conotoxin T superfamily. In terms of processing, contains 2 disulfide bonds that can be either 'C1-C3, C2-C4' or 'C1-C4, C2-C3', since these disulfide connectivities have been observed for conotoxins with cysteine framework V (for examples, see AC P0DQQ7 and AC P81755). In terms of tissue distribution, expressed by the venom duct.

The protein localises to the secreted. This Conus textile (Cloth-of-gold cone) protein is Conotoxin TxMRCL-D012.